The chain runs to 516 residues: Pickpocket protein 11 (516 aa).

The next 2 membrane-spanning stretches (helical) occupy residues 117-137 (ILWW…VIMS) and 454-474 (FIGT…VSVF).

This sequence belongs to the amiloride-sensitive sodium channel (TC 1.A.6) family. As to expression, expressed in embryonic and larval tracheal systems in the dorsal trunk and transverse connective (TC), but not in the junction between the dorsal trunk and TC, and in several tracheal branches and terminal cells. In larvae, also expressed in ventral pits. Expressed in the taste-sensing terminal organ of the larval head. In adult, expressed in hairs on the tibia, femur, tarsi of the leg and wing margin.

Its subcellular location is the membrane. In terms of biological role, part of a complex that plays a role in tracheal liquid clearance. In both larvae and adults, contributes to the behavioral response to salt. Probable role in sodium transport. This Drosophila melanogaster (Fruit fly) protein is Pickpocket protein 11 (ppk11).